The sequence spans 232 residues: Platelet-activating factor acetylhydrolase IB subunit alpha1 (232 aa).

The segment at 1-20 is disordered; the sequence is MSGEGENPASKPTPVQDVQG. At Ser-2 the chain carries N-acetylserine. Residue Ser-2 is modified to Phosphoserine. Active-site residues include Ser-48, Asp-193, and His-196.

It belongs to the 'GDSL' lipolytic enzyme family. Platelet-activating factor acetylhydrolase IB beta/gamma subunits subfamily. Forms a catalytic dimer which is either homodimer (alpha1/alpha1 homodimer) or heterodimer with PAFAH1B2 (alpha1/alpha2 heterodimer). Component of the cytosolic (PAF-AH (I)) heterotetrameric enzyme, which is composed of PAFAH1B1 (beta), PAFAH1B2 (alpha2) and PAFAH1B3 (alpha1) subunits. The catalytic activity of the enzyme resides in the alpha1 (PAFAH1B3) and alpha2 (PAFAH1B2) subunits, whereas the beta subunit (PAFAH1B1) has regulatory activity. Trimer formation is not essential for the catalytic activity. Interacts with VLDLR; this interaction may modulate the Reelin pathway.

The protein localises to the cytoplasm. The enzyme catalyses a 1-O-alkyl-2-acetyl-sn-glycero-3-phosphocholine + H2O = a 1-O-alkyl-sn-glycero-3-phosphocholine + acetate + H(+). It catalyses the reaction 1-O-hexadecyl-2-acetyl-sn-glycero-3-phosphocholine + H2O = 1-O-hexadecyl-sn-glycero-3-phosphocholine + acetate + H(+). It carries out the reaction 1-O-hexadecyl-2-acetyl-sn-glycero-3-phosphate + H2O = 1-O-hexadecyl-sn-glycero-3-phosphate + acetate + H(+). With respect to regulation, beta subunit (PAFAH1B1) inhibits the acetylhydrolase activity of the alpha1/alpha1 catalytic homodimer. Its function is as follows. Alpha1 catalytic subunit of the cytosolic type I platelet-activating factor (PAF) acetylhydrolase (PAF-AH (I)) heterotetrameric enzyme that catalyzes the hydrolyze of the acetyl group at the sn-2 position of PAF and its analogs and modulates the action of PAF. The activity and substrate specificity of PAF-AH (I) are affected by its subunit composition. Both alpha1/alpha1 homodimer (PAFAH1B3/PAFAH1B3 homodimer) and alpha1/alpha2 heterodimer(PAFAH1B3/PAFAH1B2 heterodimer) hydrolyze 1-O-alkyl-2-acetyl-sn-glycero-3-phosphoric acid (AAGPA) more efficiently than PAF, but they have little hydrolytic activity towards 1-O-alkyl-2-acetyl-sn-glycero-3-phosphorylethanolamine (AAGPE). Plays an important role during the development of brain. This is Platelet-activating factor acetylhydrolase IB subunit alpha1 from Mus musculus (Mouse).